A 649-amino-acid chain; its full sequence is Centrosomal protein of 63 kDa-A (649 aa).

2 coiled-coil regions span residues 19–185 (DSCE…YQHQ) and 222–556 (EEEL…DAAS). S560 carries the phosphoserine; by atm and atr modification. The stretch at 612 to 645 (FLQEEEQRSHELLQRLNAHIEELKQESQRTVEHF) forms a coiled coil.

Belongs to the CEP63 family. Phosphorylation at Ser-560 by atm and atr promotes its delocalization from the centrosome and impairs its ability to promote centrosome dependent spindle assembly.

It is found in the cytoplasm. The protein resides in the cytoskeleton. It localises to the microtubule organizing center. Its subcellular location is the centrosome. The protein localises to the centriole. In terms of biological role, required for normal spindle assembly. Plays a key role in mother-centriole-dependent centriole duplication. Plays a role in DNA damage response. Following DNA damage, such as double-strand breaks (DSBs), is removed from centrosomes; this leads to the inactivation of spindle assembly and delay in mitotic progression. The protein is Centrosomal protein of 63 kDa-A (cep63-a) of Xenopus laevis (African clawed frog).